Consider the following 497-residue polypeptide: Aspartyl/glutamyl-tRNA(Asn/Gln) amidotransferase subunit B (497 aa).

The protein belongs to the GatB/GatE family. GatB subfamily. Heterotrimer of A, B and C subunits.

It carries out the reaction L-glutamyl-tRNA(Gln) + L-glutamine + ATP + H2O = L-glutaminyl-tRNA(Gln) + L-glutamate + ADP + phosphate + H(+). The enzyme catalyses L-aspartyl-tRNA(Asn) + L-glutamine + ATP + H2O = L-asparaginyl-tRNA(Asn) + L-glutamate + ADP + phosphate + 2 H(+). Functionally, allows the formation of correctly charged Asn-tRNA(Asn) or Gln-tRNA(Gln) through the transamidation of misacylated Asp-tRNA(Asn) or Glu-tRNA(Gln) in organisms which lack either or both of asparaginyl-tRNA or glutaminyl-tRNA synthetases. The reaction takes place in the presence of glutamine and ATP through an activated phospho-Asp-tRNA(Asn) or phospho-Glu-tRNA(Gln). The sequence is that of Aspartyl/glutamyl-tRNA(Asn/Gln) amidotransferase subunit B from Nocardioides sp. (strain ATCC BAA-499 / JS614).